Here is a 68-residue protein sequence, read N- to C-terminus: MTIIFLICLDASTQSTTNNSINNNNNNNNNNNNNNNNNNNNNNNNNNNNNNNNNNNNNNSKVFDFNIF.

The signal sequence occupies residues 1-15 (MTIIFLICLDASTQS). Residues 14 to 68 (QSTTNNSINNNNNNNNNNNNNNNNNNNNNNNNNNNNNNNNNNNNNNSKVFDFNIF) form a disordered region. Residues asparagine 18 and asparagine 58 are each glycosylated (N-linked (GlcNAc...) asparagine). Positions 22 to 59 (NNNNNNNNNNNNNNNNNNNNNNNNNNNNNNNNNNNNNN) are enriched in low complexity.

Its subcellular location is the secreted. This is an uncharacterized protein from Dictyostelium discoideum (Social amoeba).